A 538-amino-acid chain; its full sequence is Methyl-accepting chemotaxis protein NahY (538 aa).

Topologically, residues 1-9 (MQQFTIRTR) are cytoplasmic. The helical transmembrane segment at 10 to 30 (LLMLVGAMFIGFITIELMGFS) threads the bilayer. Residues 31–187 (ALQRGVASLN…AVVLYDSSRT (157 aa)) lie on the Periplasmic side of the membrane. A helical transmembrane segment spans residues 188–208 (MLALLLLGILICGGVFATRLI). An HAMP domain is found at 209–261 (RSIIHPLTTLKDAAARVALGDLSQSIQVSGRNEVTDVQQSVQAMQANLRNTLQ). At 209–538 (RSIIHPLTTL…LNNLVNRFSM (330 aa)) the chain is on the cytoplasmic side. Residues 266–502 (SAAQLAAAAE…EVDRNLVAIS (237 aa)) enclose the Methyl-accepting transducer domain.

This sequence belongs to the methyl-accepting chemotaxis (MCP) protein family.

It localises to the cell inner membrane. In terms of biological role, chemotactic-signal transducers respond to changes in the concentration of attractants and repellents in the environment, transduce a signal from the outside to the inside of the cell, and facilitate sensory adaptation through the variation of the level of methylation. Chemoreceptor for naphthalene or a related compound. May facilitate biodegradation. The protein is Methyl-accepting chemotaxis protein NahY (nahY) of Pseudomonas putida (Arthrobacter siderocapsulatus).